We begin with the raw amino-acid sequence, 214 residues long: Probable septum site-determining protein MinC (214 aa).

Belongs to the MinC family. As to quaternary structure, interacts with MinD and FtsZ.

Cell division inhibitor that blocks the formation of polar Z ring septums. Rapidly oscillates between the poles of the cell to destabilize FtsZ filaments that have formed before they mature into polar Z rings. Prevents FtsZ polymerization. The sequence is that of Probable septum site-determining protein MinC from Thermoanaerobacter pseudethanolicus (strain ATCC 33223 / 39E) (Clostridium thermohydrosulfuricum).